We begin with the raw amino-acid sequence, 103 residues long: Putative defensin-like protein 305 (103 aa).

An N-terminal signal peptide occupies residues 1 to 31 (MREEILEIFLLVNFVFILCTSIMVRIRYVSC). 3 cysteine pairs are disulfide-bonded: C31/C51, C37/C56, and C42/C58.

It belongs to the DEFL family.

It localises to the secreted. In Arabidopsis thaliana (Mouse-ear cress), this protein is Putative defensin-like protein 305.